The chain runs to 424 residues: Sulfatase ppz1 (424 aa).

Residues D13, D203, and N204 each contribute to the Ca(2+) site.

This sequence belongs to the sulfatase family. Ca(2+) serves as cofactor.

Sulfatase; part of the gene cluster that mediates the biosynthesis of pyrrolopyrazines, secondary metabolites showing insecticidal activity. The role of ppz1 within the pathway has still to be determined. The single multifunctional NRPS ppzA is sufficient to produce peramine via condensation of 1-pyrroline-5-carboxylate and arginine, N-methylation of the alpha-amino group of arginine and reduction of the thioester and the cyclization to form an iminium ion resulting in release from the peptide synthetase. Deprotonation of this intermediate and oxidation of the pyrroline ring would give rise to peramine. In Epichloe species that produce only peramine, the peramine synthetase gene is not localized in a gene cluster, in contrast to Metarhizium species that contain additional pyrrolopyrazine biosynthesis genes. The 2-oxoglutarate-Fe(II) type oxidoreductase ppzC hydroxylates peramine to yield the newly identified compound 8-hydroxyperamine whereas ppzD converts L-proline into trans-4-hydroxy-L-proline, a precursor of peramine biosynthesis. This Metarhizium majus (strain ARSEF 297) protein is Sulfatase ppz1.